The sequence spans 543 residues: Cysteine/serine-rich nuclear protein 2 (543 aa).

M1 carries the post-translational modification N-acetylmethionine. Disordered stretches follow at residues 1 to 51, 281 to 305, and 488 to 543; these read MDAF…SFTP, KRQVSRPAAPDEEPSPTASCSLTGA, and DCNP…PLAV. Positions 31 to 40 are enriched in low complexity; that stretch reads SSDSADSCDS. Polar residues-rich tracts occupy residues 42 to 51 and 296 to 305; these read NPPTTASFTP and PTASCSLTGA.

It belongs to the AXUD1 family.

The protein resides in the nucleus. In terms of biological role, binds to the consensus sequence 5'-AGAGTG-3' and has transcriptional activator activity. May play a role in apoptosis. The chain is Cysteine/serine-rich nuclear protein 2 (CSRNP2) from Homo sapiens (Human).